Here is a 374-residue protein sequence, read N- to C-terminus: MAQPYPPAQYPPPPQNGIPAEYAPPPPHPTQDYSGQTPVPPEHGMTLYTPAQTHPEQPGTEASTQPIAGTQTVPQADEAAQTDNQQLHPSDPTEKQQPKRLHVSNIPFRFRDPDLRQMFGQFGKILDVEIIFNERGSKGFGFVTFETSSDADRAREKLNGTIVEGRKIEVNNATARVMTNKKPGNPYANGWKLNPVVGTVYGPEFYAVTSFPYPTTGTAVAYRGAHLRGRGRAVYNTFRAAPPPPPIPTYGAALEQTLVKMPVPWAGLAPCPLPPQQTPEPAYPTSPAFPPLSCPFASRVVYQDGFYGAEIYGGYAAYRYAQPAAATAAAYSDSYGRVYAAADPYHHTIGPTATYSIGTMASLCRGGYSRFTPY.

Pro residues predominate over residues 1 to 29 (MAQPYPPAQYPPPPQNGIPAEYAPPPPHP). The tract at residues 1–105 (MAQPYPPAQY…QQPKRLHVSN (105 aa)) is disordered. The span at 49-74 (TPAQTHPEQPGTEASTQPIAGTQTVP) shows a compositional bias: polar residues. The RRM domain maps to 99–175 (KRLHVSNIPF…RKIEVNNATA (77 aa)). R223 is modified (asymmetric dimethylarginine; alternate). Residue R223 is modified to Omega-N-methylarginine; alternate. Asymmetric dimethylarginine is present on R319.

In terms of processing, phosphorylated. Widely expressed in brain, including in cerebral cortex, hippocampus, thalamus, caudate/putamen, cerebellum, as well as in the spinal cord (at protein level). Not expressed in all neuronal cells within a region, in cerebellum, expression is absent in Purkinje cells (at protein level). Expressed in the retina in the ganglion cells and some cells in the inner nuclear layer, but absent from the photoreceptor cells and most cells in the inner nuclear layer (at protein level).

Its subcellular location is the nucleus. It localises to the cytoplasm. Its function is as follows. Pre-mRNA alternative splicing regulator. Regulates alternative splicing of RBFOX2 to enhance the production of mRNA species that are targeted for nonsense-mediated decay (NMD). This Mus musculus (Mouse) protein is RNA binding protein fox-1 homolog 3 (Rbfox3).